A 2495-amino-acid polypeptide reads, in one-letter code: Zinc finger protein 462 (2495 aa).

3 C2H2-type zinc fingers span residues 4-27 (LQCD…QDVH), 108-131 (FQCK…RKVH), and 162-185 (FSCQ…KMYH). Residue Lys-20 forms a Glycyl lysine isopeptide (Lys-Gly) (interchain with G-Cter in SUMO1); alternate linkage. Lys-20 is covalently cross-linked (Glycyl lysine isopeptide (Lys-Gly) (interchain with G-Cter in SUMO2); alternate). The segment at 215–241 (PCKELPAEVVERSILESMVKPLTKSRG) is interaction with PBX1. Residues Lys-234 and Lys-271 each participate in a glycyl lysine isopeptide (Lys-Gly) (interchain with G-Cter in SUMO2) cross-link. Disordered regions lie at residues 278–301 (QQEG…NSTY), 329–357 (RPNS…NSGL), and 370–395 (DMTN…DLNE). A compositionally biased stretch (low complexity) spans 332 to 343 (SSSTSKFSSSMS). Glycyl lysine isopeptide (Lys-Gly) (interchain with G-Cter in SUMO2) cross-links involve residues Lys-337, Lys-348, and Lys-350. 2 positions are modified to phosphoserine: Ser-351 and Ser-355. Polar residues predominate over residues 370 to 387 (DMTNSSADLDTNSMLNDS). Lys-429 is covalently cross-linked (Glycyl lysine isopeptide (Lys-Gly) (interchain with G-Cter in SUMO2)). 2 C2H2-type zinc fingers span residues 440 to 463 (FQCP…ENIH) and 471 to 493 (YKCD…KQCH). A Glycyl lysine isopeptide (Lys-Gly) (interchain with G-Cter in SUMO2) cross-link involves residue Lys-485. The tract at residues 492-590 (CHTGTSDWDT…PQPPTQAPPL (99 aa)) is disordered. A compositionally biased stretch (polar residues) spans 493 to 502 (HTGTSDWDTV). Low complexity predominate over residues 503-515 (NSQSESLSSSLNE). Over residues 542–590 (PPQPPPPLPPPPPPPSQPLPQPPPPPLQSPHQVPPPTQQPQPPTQAPPL) the composition is skewed to pro residues. The segment at 593–616 (YKCTMCSYSTMTLKGLRVHQQHKH) adopts a C2H2-type 6 zinc-finger fold. Residues Lys-624, Lys-650, and Lys-661 each participate in a glycyl lysine isopeptide (Lys-Gly) (interchain with G-Cter in SUMO2) cross-link. The disordered stretch occupies residues 629-654 (PSSLPLENETDSHPSSSNTVKKSQTS). Positions 641-654 (HPSSSNTVKKSQTS) are enriched in polar residues. Position 681 is a phosphoserine (Ser-681). A Glycyl lysine isopeptide (Lys-Gly) (interchain with G-Cter in SUMO2) cross-link involves residue Lys-699. 3 C2H2-type zinc fingers span residues 835–858 (YYCK…QRMH), 878–900 (YRCL…YGEH), and 917–940 (YRCR…QRMH). Residue Lys-978 forms a Glycyl lysine isopeptide (Lys-Gly) (interchain with G-Cter in SUMO2) linkage. Positions 980–999 (MATSTPVARGGGLPATFNKN) are disordered. Residues 1023–1046 (YDCDVCSFASPNMHSVLVHYQKKH) form a C2H2-type 10 zinc finger. Ser-1083 is subject to Phosphoserine. Lys-1128 participates in a covalent cross-link: Glycyl lysine isopeptide (Lys-Gly) (interchain with G-Cter in SUMO2). A Phosphoserine modification is found at Ser-1159. Residues Lys-1196, Lys-1204, Lys-1210, and Lys-1232 each participate in a glycyl lysine isopeptide (Lys-Gly) (interchain with G-Cter in SUMO2) cross-link. 2 C2H2-type zinc fingers span residues 1254-1277 (LKCR…KKDH) and 1459-1482 (YQCT…GKKH). Lys-1488 participates in a covalent cross-link: Glycyl lysine isopeptide (Lys-Gly) (interchain with G-Cter in SUMO2). Residues 1504 to 1527 (YKCRHCPYINTRIHGVLTHYQKRH) form a C2H2-type 13 zinc finger. Glycyl lysine isopeptide (Lys-Gly) (interchain with G-Cter in SUMO2) cross-links involve residues Lys-1560 and Lys-1580. 3 consecutive C2H2-type zinc fingers follow at residues 1566–1589 (YRCK…EKYH), 1649–1672 (FRCQ…RIKH), and 1686–1709 (FKCA…QKRH). Glycyl lysine isopeptide (Lys-Gly) (interchain with G-Cter in SUMO2) cross-links involve residues Lys-1687 and Lys-1769. The C2H2-type 17 zinc finger occupies 1881–1903 (FQCKHCDSKLQSIAELTSHLNIH). Residue Lys-1935 forms a Glycyl lysine isopeptide (Lys-Gly) (interchain with G-Cter in SUMO2) linkage. A C2H2-type 18; degenerate zinc finger spans residues 1957 to 1981 (YKCKFCVEVHPTLRAICNHLRKHVQ). An N6-methyllysine modification is found at Lys-1993. 3 C2H2-type zinc fingers span residues 2014–2037 (YSCQ…QTHH), 2043–2066 (FRCK…LKAH), and 2072–2095 (YKCS…LKVH). Lys-2093 is covalently cross-linked (Glycyl lysine isopeptide (Lys-Gly) (interchain with G-Cter in SUMO2)). 2 stretches are compositionally biased toward polar residues: residues 2112-2121 (SHAHPSSQKA) and 2132-2149 (DSSY…NHYQ). A disordered region spans residues 2112–2172 (SHAHPSSQKA…VPPSGTAAGT (61 aa)). Phosphoserine occurs at positions 2161 and 2166. 3 consecutive C2H2-type zinc fingers follow at residues 2180-2203 (LHCE…RDKH), 2209-2232 (FKCK…EAGH), and 2243-2265 (LRCP…IVLH). A Glycyl lysine isopeptide (Lys-Gly) (interchain with G-Cter in SUMO2) cross-link involves residue Lys-2282. C2H2-type zinc fingers lie at residues 2289–2311 (FRCD…IEKH) and 2317–2340 (YKCQ…RDEH). Residues 2361 to 2387 (KEKIESSSSEDEDKDDEMSSKAEDREL) are disordered. The segment covering 2377-2387 (EMSSKAEDREL) has biased composition (basic and acidic residues). The segment at 2403–2425 (FPCEFCGRAFSQGSEWERHVLRH) adopts a C2H2-type 27 zinc-finger fold. A Glycyl lysine isopeptide (Lys-Gly) (interchain with G-Cter in SUMO2) cross-link involves residue Lys-2493.

In terms of assembly, interacts with PBX1 isoform PBX1b; this interaction prevents PBX1-HOXA9 heterodimer from forming and binding to DNA. In terms of tissue distribution, expressed in the cerebral cortex (at protein level). Expressed in embryonic stem cells (at protein level). Expressed in heart, liver, kidney, muscle, and female and male genital tracts (at protein level).

It localises to the nucleus. Zinc finger nuclear factor involved in transcription by regulating chromatin structure and organization. Involved in the pluripotency and differentiation of embryonic stem cells by regulating SOX2, POU5F1/OCT4, and NANOG. By binding PBX1, prevents the heterodimerization of PBX1 and HOXA9 and their binding to DNA. Regulates neuronal development and neural cell differentiation. The polypeptide is Zinc finger protein 462 (Mus musculus (Mouse)).